A 475-amino-acid chain; its full sequence is Protein nucleotidyltransferase YdiU (475 aa).

ATP-binding residues include glycine 82, glycine 84, arginine 85, lysine 105, aspartate 117, glycine 118, arginine 168, and arginine 175. Aspartate 240 (proton acceptor) is an active-site residue. The Mg(2+) site is built by asparagine 241 and aspartate 250. Aspartate 250 contacts ATP.

Belongs to the SELO family. Mg(2+) serves as cofactor. Requires Mn(2+) as cofactor.

The catalysed reaction is L-seryl-[protein] + ATP = 3-O-(5'-adenylyl)-L-seryl-[protein] + diphosphate. It catalyses the reaction L-threonyl-[protein] + ATP = 3-O-(5'-adenylyl)-L-threonyl-[protein] + diphosphate. It carries out the reaction L-tyrosyl-[protein] + ATP = O-(5'-adenylyl)-L-tyrosyl-[protein] + diphosphate. The enzyme catalyses L-histidyl-[protein] + UTP = N(tele)-(5'-uridylyl)-L-histidyl-[protein] + diphosphate. The catalysed reaction is L-seryl-[protein] + UTP = O-(5'-uridylyl)-L-seryl-[protein] + diphosphate. It catalyses the reaction L-tyrosyl-[protein] + UTP = O-(5'-uridylyl)-L-tyrosyl-[protein] + diphosphate. Nucleotidyltransferase involved in the post-translational modification of proteins. It can catalyze the addition of adenosine monophosphate (AMP) or uridine monophosphate (UMP) to a protein, resulting in modifications known as AMPylation and UMPylation. This chain is Protein nucleotidyltransferase YdiU, found in Aeromonas hydrophila subsp. hydrophila (strain ATCC 7966 / DSM 30187 / BCRC 13018 / CCUG 14551 / JCM 1027 / KCTC 2358 / NCIMB 9240 / NCTC 8049).